Reading from the N-terminus, the 399-residue chain is MAARPGLLWLLGLALCVLGGGHLSHPPHVFPQRRLGVREPRDMQREIREVLGLPGRPRSRAPVGAAQQPASAPLFMLDLYRAMTDDSGGGTPQPHLDRADLIMSFVNIVERDRTLGYQEPHWKEFHFDLTQIPAGEAVTAAEFRIYKEPSTHPLNTTLHISMFEVVQEHSNRESDLFFLDLQTLRSGDEGWLVLDITAASDRWLLNHHKDLGLRLYVETEDGHSIDPGLAGLLGRQAPRSRQPFMVGFFRANQSPVRAPRTARPLKKKQLNQINQLPHSNKHLGILDDGHGSHGREVCRRHELYVSFRDLGWLDSVIAPQGYSAYYCAGECIYPLNSCMNSTNHATMQALVHLMKPDIIPKVCCVPTELSAISLLYYDRNNNVILRRERNMVVQACGCH.

Positions 1–19 (MAARPGLLWLLGLALCVLG) are cleaved as a signal peptide. Positions 20-260 (GGHLSHPPHV…ANQSPVRAPR (241 aa)) are excised as a propeptide. N-linked (GlcNAc...) asparagine glycosylation is found at Asn155 and Asn340. 3 disulfide bridges follow: Cys298/Cys364, Cys327/Cys396, and Cys331/Cys398.

This sequence belongs to the TGF-beta family. As to quaternary structure, homodimer; disulfide-linked. As to expression, expressed in testis. Expressed in decidual cells of the uterus and in trophoblast cells of the labyrinthine region of the placenta and in the inner root sheath of hair follicles of early postnatal skin. Expressed in the extraembryonic ectoderm in pregastrula and gastrula stage mouse embryos. Expressed in brown adipose tissue and brain.

The protein localises to the secreted. Induces cartilage and bone formation. May be the osteoinductive factor responsible for the phenomenon of epithelial osteogenesis. Plays a role in calcium regulation and bone homeostasis. Involved in the generation of primordial germ cells; this function involves Bmp4 in a synergistic manner though separate receptor complexes seem to be involved. Required for the initiation and maintenance of spermatogenesis. Signaling protein involved in regulation of thermogenesis and energy balance. Proposed to increase the peripheral response of brown adipose tissue (BAT) to adrenergic stimulation while acting centrally in the hypothalamus to increase sympathetic output to BAT. The protein is Bone morphogenetic protein 8B (Bmp8b) of Mus musculus (Mouse).